The sequence spans 109 residues: Cell division protein ZapA (109 aa).

The stretch at 22–99 forms a coiled coil; sequence EQQDALNLAA…IEQALLEQGR (78 aa).

It belongs to the ZapA family. Type 1 subfamily. As to quaternary structure, homodimer. Interacts with FtsZ.

The protein localises to the cytoplasm. Its function is as follows. Activator of cell division through the inhibition of FtsZ GTPase activity, therefore promoting FtsZ assembly into bundles of protofilaments necessary for the formation of the division Z ring. It is recruited early at mid-cell but it is not essential for cell division. The sequence is that of Cell division protein ZapA from Erwinia tasmaniensis (strain DSM 17950 / CFBP 7177 / CIP 109463 / NCPPB 4357 / Et1/99).